Reading from the N-terminus, the 251-residue chain is MLQTMKTLTLIPARLGSTRLPNKPLADICGKPMIVHVADRAAAAKLGRTVIATDSEEIFKVVAAHGHEAIMTRGDHESGSDRIYEALAKLDPSGEIDAVVNVQGDLPTIDPDTIRRALLPLEDGPADIATLGVEITVEEEKTNPNVVKIVGSPLAGNRRLRALYFTRATAPYGEGPLYHHIGLYAYRRSALERFVKLGPSPLEKREKLEQLRALEAGMRIDVEIVKTVPLGVDTQADLDRARTFCSQAGTI.

This sequence belongs to the KdsB family.

Its subcellular location is the cytoplasm. It catalyses the reaction 3-deoxy-alpha-D-manno-oct-2-ulosonate + CTP = CMP-3-deoxy-beta-D-manno-octulosonate + diphosphate. It participates in nucleotide-sugar biosynthesis; CMP-3-deoxy-D-manno-octulosonate biosynthesis; CMP-3-deoxy-D-manno-octulosonate from 3-deoxy-D-manno-octulosonate and CTP: step 1/1. It functions in the pathway bacterial outer membrane biogenesis; lipopolysaccharide biosynthesis. Its function is as follows. Activates KDO (a required 8-carbon sugar) for incorporation into bacterial lipopolysaccharide in Gram-negative bacteria. This Brucella abortus (strain 2308) protein is 3-deoxy-manno-octulosonate cytidylyltransferase.